Reading from the N-terminus, the 80-residue chain is uncharacterized protein (80 aa).

This is an uncharacterized protein from Synechococcus sp. (strain PCC 6716).